The following is a 951-amino-acid chain: Coiled-coil domain-containing protein 15 (951 aa).

Coiled-coil stretches lie at residues 64–89, 154–193, 782–813, and 839–874; these read LIEEELKEQLRKKQEALKHFQKQVKY, DGIEDEENQNELFQQQAQALSETMKQARHRLASFKTVIKK, MDIEREQVKEQQRQKEQKKKIEKIKKKREQEC, and LAQLQLQEIKGTREKQQREKEYLRYVEALRAQIQEK.

In terms of assembly, interacts with POC5, POC1B, CETN2 and FAM161A.

The protein localises to the cytoplasm. The protein resides in the cytoskeleton. It is found in the microtubule organizing center. It localises to the centrosome. Its subcellular location is the centriole. The protein localises to the centriolar satellite. Functionally, plays an important role in primary cilium assembly, maintenance, and length regulation. Interacts with centriole inner scaffold proteins to promote proper centriole size and integrity and assembly of functional cilia. Required for the recruitment of both the inner scaffold protein POC1B and the distal SFI1/CETN2 complex to centrioles. The protein is Coiled-coil domain-containing protein 15 (CCDC15) of Homo sapiens (Human).